The primary structure comprises 460 residues: MLDYMDYVQQCFDSAGRWKRQNSYGEVTQTPRNLIDFKIPDAVNLQVSNRSTKYSYNSLQLSTRQSINGSLTYLYTNLDAVEGLVKNTEELPLHDIVQTYELPAVTHHRKEKTNFHKCSLFYGKIFYPSSDVEAMMIKRFSPMNQVIVKCLSSLKENVNIFTAYFQRNSEKNFQELIVSSNDLLCGYRISHHFLRTPSKLNSSLYNNSSLFFGAEFWLGMISLNPGCSTSLKYCTHSANTGRPLTLTLSWNPLFGHISTTYSAMTSSSSTFCAKYDFNIYSIESNLSFGIELWRKTGALFKSEDSVEANRKEYEQNFYISHDHNLLPSKYGYDHEYNISDGKLSKEHKRNKIIKDLNHAFSTSLQKIDKEKTRIENFGNIIRNSHFTSVFKASTSLRERNLKFLWEGEYKNFLLSAGTELRVLKAEESELRRTSGQSSNSLLNEFSLQPLKFGVQIQFSS.

It belongs to the MDM10 family. As to quaternary structure, component of the ER-mitochondria encounter structure (ERMES) or MDM complex, composed of MMM1, MDM10, MDM12 and MDM34. Associates with the mitochondrial outer membrane sorting assembly machinery SAM(core) complex.

The protein localises to the mitochondrion outer membrane. Functionally, component of the ERMES/MDM complex, which serves as a molecular tether to connect the endoplasmic reticulum and mitochondria. Components of this complex are involved in the control of mitochondrial shape and protein biogenesis and may function in phospholipid exchange. MDM10 is involved in the late assembly steps of the general translocase of the mitochondrial outer membrane (TOM complex). Functions in the TOM40-specific route of the assembly of outer membrane beta-barrel proteins, including the association of TOM40 with the receptor TOM22 and small TOM proteins. Can associate with the SAM(core) complex as well as the MDM12-MMM1 complex, both involved in late steps of the major beta-barrel assembly pathway, that is responsible for biogenesis of all outer membrane beta-barrel proteins. May act as a switch that shuttles between both complexes and channels precursor proteins into the TOM40-specific pathway. Plays a role in mitochondrial morphology and in the inheritance of mitochondria. This is Mitochondrial distribution and morphology protein 10 from Candida glabrata (strain ATCC 2001 / BCRC 20586 / JCM 3761 / NBRC 0622 / NRRL Y-65 / CBS 138) (Yeast).